We begin with the raw amino-acid sequence, 298 residues long: MLFLVGLGLSSHEDITVRGLNAVKRCARVYLEHYTSILMTASKEELEGFYGKPVVLADREMVESGCEEILRDADKEDVAFLVVGDPFGATTHTDLVLRAKKQGIVVEVVHNASVMNAVGSCGLQLYNFGQTISMVFFTDSWRPDSWYDKVLENRRIGLHTLVLLDIKVKEQSPENLARGRLIFEPPRYMSISQCCEQLLEVEEKRGQQAYTPDTPCVAISRLGAPTQHMKSGSIHELAEYDAGEPLHSLVILGRQCHELELEYLLEFSEDQERFKDQVHRDQEFFKPAPWVPPPEDED.

S-adenosyl-L-methionine is bound by residues L9, D85, G88, 113 to 114 (SV), L164, L222, and H247.

Belongs to the diphthine synthase family.

The protein localises to the cytoplasm. It catalyses the reaction 2-[(3S)-amino-3-carboxypropyl]-L-histidyl-[translation elongation factor 2] + 4 S-adenosyl-L-methionine = diphthine methyl ester-[translation elongation factor 2] + 4 S-adenosyl-L-homocysteine + 3 H(+). The protein operates within protein modification; peptidyl-diphthamide biosynthesis. S-adenosyl-L-methionine-dependent methyltransferase that catalyzes four methylations of the modified target histidine residue in translation elongation factor 2 (EF-2), to form an intermediate called diphthine methyl ester. The four successive methylation reactions represent the second step of diphthamide biosynthesis. This is Diphthine methyl ester synthase (DPH5) from Eremothecium gossypii (strain ATCC 10895 / CBS 109.51 / FGSC 9923 / NRRL Y-1056) (Yeast).